Consider the following 385-residue polypeptide: Homoserine O-succinyltransferase (385 aa).

Residues Asn45–Asp355 form the AB hydrolase-1 domain. Ser151 acts as the Nucleophile in catalysis. Arg221 is a substrate binding site. Residues Asp316 and His349 contribute to the active site. Asp350 contacts substrate.

It belongs to the AB hydrolase superfamily. MetX family. Homodimer.

It localises to the cytoplasm. It catalyses the reaction L-homoserine + succinyl-CoA = O-succinyl-L-homoserine + CoA. It functions in the pathway amino-acid biosynthesis; L-methionine biosynthesis via de novo pathway; O-succinyl-L-homoserine from L-homoserine: step 1/1. Transfers a succinyl group from succinyl-CoA to L-homoserine, forming succinyl-L-homoserine. The chain is Homoserine O-succinyltransferase from Herminiimonas arsenicoxydans.